Here is a 337-residue protein sequence, read N- to C-terminus: DNA-directed RNA polymerase subunit alpha (337 aa).

The tract at residues 1–223 (MLISQRPALT…ELFGLAQELN (223 aa)) is alpha N-terminal domain (alpha-NTD). An alpha C-terminal domain (alpha-CTD) region spans residues 238–337 (SEHIAAYSMP…IDTEGEDIAE (100 aa)).

It belongs to the RNA polymerase alpha chain family. Homodimer. The RNAP catalytic core consists of 2 alpha, 1 beta, 1 beta' and 1 omega subunit. When a sigma factor is associated with the core the holoenzyme is formed, which can initiate transcription.

It carries out the reaction RNA(n) + a ribonucleoside 5'-triphosphate = RNA(n+1) + diphosphate. In terms of biological role, DNA-dependent RNA polymerase catalyzes the transcription of DNA into RNA using the four ribonucleoside triphosphates as substrates. This Corynebacterium jeikeium (strain K411) protein is DNA-directed RNA polymerase subunit alpha.